The chain runs to 111 residues: RNA polymerase-binding protein RbpA (111 aa).

This sequence belongs to the RNA polymerase-binding protein RbpA family. As to quaternary structure, forms a complex with the RNAP catalytic core and with free principal sigma factors.

Binds to RNA polymerase (RNAP), stimulating transcription from principal, but not alternative sigma factor promoters. This Mycobacterium tuberculosis (strain CDC 1551 / Oshkosh) protein is RNA polymerase-binding protein RbpA.